Consider the following 487-residue polypeptide: N-succinylglutamate 5-semialdehyde dehydrogenase (487 aa).

221-226 serves as a coordination point for NAD(+); sequence GSSDTG. Active-site residues include glutamate 244 and cysteine 278.

The protein belongs to the aldehyde dehydrogenase family. AstD subfamily.

The enzyme catalyses N-succinyl-L-glutamate 5-semialdehyde + NAD(+) + H2O = N-succinyl-L-glutamate + NADH + 2 H(+). It participates in amino-acid degradation; L-arginine degradation via AST pathway; L-glutamate and succinate from L-arginine: step 4/5. Catalyzes the NAD-dependent reduction of succinylglutamate semialdehyde into succinylglutamate. This Burkholderia ambifaria (strain MC40-6) protein is N-succinylglutamate 5-semialdehyde dehydrogenase.